A 343-amino-acid polypeptide reads, in one-letter code: N-acetyl-gamma-glutamyl-phosphate reductase (343 aa).

Cysteine 147 is a catalytic residue.

It belongs to the NAGSA dehydrogenase family. Type 1 subfamily.

It localises to the cytoplasm. It carries out the reaction N-acetyl-L-glutamate 5-semialdehyde + phosphate + NADP(+) = N-acetyl-L-glutamyl 5-phosphate + NADPH + H(+). It participates in amino-acid biosynthesis; L-arginine biosynthesis; N(2)-acetyl-L-ornithine from L-glutamate: step 3/4. In terms of biological role, catalyzes the NADPH-dependent reduction of N-acetyl-5-glutamyl phosphate to yield N-acetyl-L-glutamate 5-semialdehyde. The protein is N-acetyl-gamma-glutamyl-phosphate reductase of Staphylococcus aureus (strain Mu3 / ATCC 700698).